A 292-amino-acid polypeptide reads, in one-letter code: Ribosome-inactivating protein saporin-2 (292 aa).

A signal peptide spans 1 to 24 (MKIYVVATIAWILLQFSAWTTTDA). Residue E200 is part of the active site.

This sequence belongs to the ribosome-inactivating protein family. Type 1 RIP subfamily.

The catalysed reaction is Endohydrolysis of the N-glycosidic bond at one specific adenosine on the 28S rRNA.. Ribosome-inactivating protein of type 1, inhibits protein synthesis in animal cells. Useful as immunotoxin for pharmacological applications. The polypeptide is Ribosome-inactivating protein saporin-2 (SAP2) (Saponaria officinalis (Common soapwort)).